Here is a 446-residue protein sequence, read N- to C-terminus: tRNA modification GTPase MnmE (446 aa).

(6S)-5-formyl-5,6,7,8-tetrahydrofolate-binding residues include Arg-24, Glu-81, and Lys-120. Residues 216–368 enclose the TrmE-type G domain; the sequence is GLHAVLIGPP…LHTRLRELAL (153 aa). Residue Asn-226 participates in K(+) binding. GTP contacts are provided by residues 226–231, 245–251, and 270–273; these read NAGKSS, TDVAGTT, and DTAG. Ser-230 is a binding site for Mg(2+). Residues Thr-245, Val-247, and Thr-250 each coordinate K(+). Residue Thr-251 participates in Mg(2+) binding. Lys-446 lines the (6S)-5-formyl-5,6,7,8-tetrahydrofolate pocket.

It belongs to the TRAFAC class TrmE-Era-EngA-EngB-Septin-like GTPase superfamily. TrmE GTPase family. In terms of assembly, homodimer. Heterotetramer of two MnmE and two MnmG subunits. The cofactor is K(+).

Its subcellular location is the cytoplasm. Functionally, exhibits a very high intrinsic GTPase hydrolysis rate. Involved in the addition of a carboxymethylaminomethyl (cmnm) group at the wobble position (U34) of certain tRNAs, forming tRNA-cmnm(5)s(2)U34. This Xanthomonas campestris pv. campestris (strain 8004) protein is tRNA modification GTPase MnmE.